Consider the following 1807-residue polypeptide: Phospholipase D (1807 aa).

Positions 1–28 (MPGPDDDVREPTAAARTNNSGYGLRAAP) are disordered. 3 helical membrane-spanning segments follow: residues 257–277 (IAFVSAIVGFIFPICLVIVTS), 305–325 (AGVFLGLAVLGGILFFAVFVY), and 587–607 (VYYILFLFAGGIIAPVVGFLA). The interval 697–734 (TASRMGTGNLAPASSRVDSSTQSEDSFEAPKPPPSSVS) is disordered. PLD phosphodiesterase domains lie at 853–880 (GFWSHHEKIVCIDQSLAFVGGLDLCFGR) and 1249–1276 (EQIYIHSKLMIADDRCAILGSANINDRS). Catalysis depends on residues histidine 858, lysine 860, aspartate 865, histidine 1254, lysine 1256, and aspartate 1261. 3 stretches are compositionally biased toward polar residues: residues 1531–1547 (FSRSNSVSTPTNFSQLD), 1568–1578 (YNSNSMPSNAS), and 1597–1614 (YPNSPSVASFQHTPQSPA). A disordered region spans residues 1531–1621 (FSRSNSVSTP…SPAIATGARS (91 aa)).

The protein belongs to the phospholipase D family. TM-PLD subfamily.

Its subcellular location is the membrane. The enzyme catalyses a 1,2-diacyl-sn-glycero-3-phosphocholine + H2O = a 1,2-diacyl-sn-glycero-3-phosphate + choline + H(+). In terms of biological role, hydrolyzes glycerol-phospholipids at the terminal phosphodiesteric bond. This is Phospholipase D from Phytophthora infestans (Potato late blight agent).